The following is a 587-amino-acid chain: Kelch-like ECH-associated protein 1B (587 aa).

Residues 44–117 (CDVTLRVRYC…AYTASISVGE (74 aa)) form the BTB domain. The BACK domain maps to 153–253 (IGIASFAEQI…LTPHFLQRQL (101 aa)). 6 Kelch repeats span residues 292 to 337 (LIYT…VISG), 338 to 388 (LLYA…VIDG), 389 to 435 (MIYA…VINR), 436 to 482 (LLYA…ALGN), 484 to 529 (IYVM…THHG), and 530 to 576 (RIYV…VTME).

It belongs to the KEAP1 family. Homodimer and heterodimer; heterodimerizes with keap1a. Component of the BCR(KEAP1) E3 ubiquitin ligase complex, at least composed of 2 molecules of cul3, 2 molecules of keap1 (keap1a and/or keap1b), and rbx1. Interacts with nfe2l2/nrf2; the interaction is direct. Non-enzymatic covalent modifications of reactive cysteines by electrophile metabolites inactivate the BCR(KEAP1) complex. As to expression, widely expressed.

The protein localises to the cytoplasm. It localises to the nucleus. The protein operates within protein modification; protein ubiquitination. Its activity is regulated as follows. Ubiquitin ligase activity of the BCR(KEAP1) complex is inhibited by oxidative stress and electrophile metabolites such as sulforaphane. Electrophile metabolites react with reactive cysteine residues in keap1 and trigger non-enzymatic covalent modifications of these cysteine residues, leading to inactivate the ubiquitin ligase activity of the BCR(KEAP1) complex. In terms of biological role, substrate-specific adapter of a BCR (BTB-CUL3-RBX1) E3 ubiquitin ligase complex that regulates the response to oxidative stress by targeting nfe2l2/nrf2 for ubiquitination. Keap1 acts as a key sensor of oxidative and electrophilic stress: in normal conditions, the BCR(KEAP1) complex mediates ubiquitination and degradation of nfe2l2/nrf2, a transcription factor regulating expression of many cytoprotective genes. In response to oxidative stress, different electrophile metabolites trigger non-enzymatic covalent modifications of highly reactive cysteine residues in KEAP1, leading to inactivate the ubiquitin ligase activity of the BCR(KEAP1) complex, promoting nfe2l2/nrf2 nuclear accumulation and expression of phase II detoxifying enzymes. This chain is Kelch-like ECH-associated protein 1B, found in Danio rerio (Zebrafish).